A 92-amino-acid polypeptide reads, in one-letter code: Small ribosomal subunit protein uS19c (92 aa).

This sequence belongs to the universal ribosomal protein uS19 family.

The protein localises to the plastid. It localises to the chloroplast. In terms of biological role, protein S19 forms a complex with S13 that binds strongly to the 16S ribosomal RNA. The chain is Small ribosomal subunit protein uS19c from Acorus calamus (Sweet flag).